The sequence spans 286 residues: Release factor glutamine methyltransferase (286 aa).

Residues 122 to 126 (GTGTG), aspartate 145, tryptophan 173, and asparagine 188 contribute to the S-adenosyl-L-methionine site. Substrate is bound at residue 188–191 (NPPY).

This sequence belongs to the protein N5-glutamine methyltransferase family. PrmC subfamily.

The enzyme catalyses L-glutaminyl-[peptide chain release factor] + S-adenosyl-L-methionine = N(5)-methyl-L-glutaminyl-[peptide chain release factor] + S-adenosyl-L-homocysteine + H(+). Functionally, methylates the class 1 translation termination release factors RF1/PrfA and RF2/PrfB on the glutamine residue of the universally conserved GGQ motif. The sequence is that of Release factor glutamine methyltransferase from Shewanella oneidensis (strain ATCC 700550 / JCM 31522 / CIP 106686 / LMG 19005 / NCIMB 14063 / MR-1).